The sequence spans 76 residues: UPF0352 protein ECA2748 (76 aa).

This sequence belongs to the UPF0352 family.

This is UPF0352 protein ECA2748 from Pectobacterium atrosepticum (strain SCRI 1043 / ATCC BAA-672) (Erwinia carotovora subsp. atroseptica).